Here is a 58-residue protein sequence, read N- to C-terminus: Large ribosomal subunit protein bL32c (58 aa).

Positions 1–19 are enriched in basic residues; it reads MAVPKKRKSKMKTRLRKAQ. The segment at 1–25 is disordered; that stretch reads MAVPKKRKSKMKTRLRKAQWKSEAS.

Belongs to the bacterial ribosomal protein bL32 family.

The protein localises to the plastid. The protein resides in the chloroplast. This chain is Large ribosomal subunit protein bL32c (rpl32), found in Chlorella vulgaris (Green alga).